A 398-amino-acid polypeptide reads, in one-letter code: Argininosuccinate synthase (398 aa).

An ATP-binding site is contributed by 9 to 17 (AYSGGLDTS). Residues tyrosine 87 and serine 92 each coordinate L-citrulline. ATP is bound at residue glycine 117. Threonine 119, asparagine 123, and aspartate 124 together coordinate L-aspartate. Asparagine 123 is a binding site for L-citrulline. Positions 127, 176, 185, 261, and 273 each coordinate L-citrulline.

Belongs to the argininosuccinate synthase family. Type 1 subfamily. In terms of assembly, homotetramer.

The protein resides in the cytoplasm. It catalyses the reaction L-citrulline + L-aspartate + ATP = 2-(N(omega)-L-arginino)succinate + AMP + diphosphate + H(+). It functions in the pathway amino-acid biosynthesis; L-arginine biosynthesis; L-arginine from L-ornithine and carbamoyl phosphate: step 2/3. The chain is Argininosuccinate synthase from Clostridium tetani (strain Massachusetts / E88).